Reading from the N-terminus, the 382-residue chain is MDSPAGYRIHDNIPLPGNLDQVDVHVTRDDDYRIHVLPDVDRAVDALLTELDGRRAVVITDDVVADLHEGRVSAELAARGQLIGRTAIRAGEKSKSLTTAFELIDWLAEVNLARRDVVIALGGGVVVDTVGFVASAYMRGVPYVNMPTTLLAQVDAGIGGKVAVDHSEAKNLVGAFYQPKAVISCLEHLRTLDTRQIRSGLAEVVKKAVIASPELFDYIEANADDLLACASPAIDVLVHAAGAIKTKLVGRDPYEIDLRRPLNFGHTTGHAVETVTNYGPVLHGEAVAFGMVVAVDVARARGLVVPEVADRVTALIRRLGLPVALEELGAVPRVDDVVAALLKIRQIRDGSLRFVLPVELGATVIAEDVTEEEVRAALVRLR.

NAD(+)-binding positions include glutamate 92 to lysine 95, glycine 124 to aspartate 128, threonine 148 to threonine 149, lysine 161, lysine 170, and histidine 188 to threonine 191. 3 residues coordinate Zn(2+): glutamate 203, histidine 266, and histidine 283.

It belongs to the sugar phosphate cyclases superfamily. EVS family. The cofactor is NAD(+). Co(2+) is required as a cofactor. Requires Zn(2+) as cofactor.

The catalysed reaction is D-sedoheptulose 7-phosphate = 2-epi-valiolone + phosphate. Functionally, catalyzes the conversion of sedoheptulose 7-phosphate to 2-epi-valiolone, which may serve as an alternative precursor for aminocyclitol biosynthesis. This is 2-epi-valiolone synthase from Actinosynnema mirum (strain ATCC 29888 / DSM 43827 / JCM 3225 / NBRC 14064 / NCIMB 13271 / NRRL B-12336 / IMRU 3971 / 101).